The chain runs to 236 residues: Uridylate kinase (236 aa).

An ATP-binding site is contributed by 10–13; it reads KLSG. Residue Gly-52 coordinates UMP. Positions 53 and 57 each coordinate ATP. Residues Asp-72 and 133–140 contribute to the UMP site; that span reads TGNPFFTT. ATP contacts are provided by Thr-160, Tyr-166, and Asp-169.

This sequence belongs to the UMP kinase family. In terms of assembly, homohexamer.

The protein localises to the cytoplasm. The catalysed reaction is UMP + ATP = UDP + ADP. It functions in the pathway pyrimidine metabolism; CTP biosynthesis via de novo pathway; UDP from UMP (UMPK route): step 1/1. With respect to regulation, inhibited by UTP. Its function is as follows. Catalyzes the reversible phosphorylation of UMP to UDP. This Cupriavidus metallidurans (strain ATCC 43123 / DSM 2839 / NBRC 102507 / CH34) (Ralstonia metallidurans) protein is Uridylate kinase.